Consider the following 196-residue polypeptide: UPF0316 protein LBL_2483 (196 aa).

A run of 3 helical transmembrane segments spans residues tyrosine 12 to isoleucine 32, isoleucine 44 to isoleucine 64, and alanine 70 to leucine 90.

It belongs to the UPF0316 family.

The protein localises to the cell membrane. This Leptospira borgpetersenii serovar Hardjo-bovis (strain L550) protein is UPF0316 protein LBL_2483.